Consider the following 239-residue polypeptide: Probable transcriptional regulatory protein LMOf2365_0385 (239 aa).

The protein belongs to the TACO1 family. YeeN subfamily.

The protein localises to the cytoplasm. The sequence is that of Probable transcriptional regulatory protein LMOf2365_0385 from Listeria monocytogenes serotype 4b (strain F2365).